The chain runs to 158 residues: NAD(P)H-quinone oxidoreductase subunit J, chloroplastic (158 aa).

Belongs to the complex I 30 kDa subunit family. In terms of assembly, NDH is composed of at least 16 different subunits, 5 of which are encoded in the nucleus.

It localises to the plastid. It is found in the chloroplast thylakoid membrane. It catalyses the reaction a plastoquinone + NADH + (n+1) H(+)(in) = a plastoquinol + NAD(+) + n H(+)(out). The catalysed reaction is a plastoquinone + NADPH + (n+1) H(+)(in) = a plastoquinol + NADP(+) + n H(+)(out). In terms of biological role, NDH shuttles electrons from NAD(P)H:plastoquinone, via FMN and iron-sulfur (Fe-S) centers, to quinones in the photosynthetic chain and possibly in a chloroplast respiratory chain. The immediate electron acceptor for the enzyme in this species is believed to be plastoquinone. Couples the redox reaction to proton translocation, and thus conserves the redox energy in a proton gradient. In Aethionema cordifolium (Lebanon stonecress), this protein is NAD(P)H-quinone oxidoreductase subunit J, chloroplastic.